The following is a 283-amino-acid chain: Cyclin-C (283 aa).

The Cyclin N-terminal domain occupies Asp-20 to Ile-151. The interval Thr-252–Ser-283 is disordered. Over residues Pro-272–Ser-283 the composition is skewed to polar residues. Phosphoserine is present on Ser-275.

It belongs to the cyclin family. Cyclin C subfamily. Component of the Mediator complex, which is composed of MED1, MED4, MED6, MED7, MED8, MED9, MED10, MED11, MED12, MED13, MED13L, MED14, MED15, MED16, MED17, MED18, MED19, MED20, MED21, MED22, MED23, MED24, MED25, MED26, MED27, MED29, MED30, MED31, CCNC, CDK8 and CDC2L6/CDK11. The MED12, MED13, CCNC and CDK8 subunits form a distinct module termed the CDK8 module. Mediator containing the CDK8 module is less active than Mediator lacking this module in supporting transcriptional activation. Individual preparations of the Mediator complex lacking one or more distinct subunits have been variously termed ARC, CRSP, DRIP, PC2, SMCC and TRAP. The cylin/CDK pair formed by CCNC/CDK8 also associates with the large subunit of RNA polymerase II.

It is found in the nucleus. Its function is as follows. Component of the Mediator complex, a coactivator involved in regulated gene transcription of nearly all RNA polymerase II-dependent genes. Mediator functions as a bridge to convey information from gene-specific regulatory proteins to the basal RNA polymerase II transcription machinery. Mediator is recruited to promoters by direct interactions with regulatory proteins and serves as a scaffold for the assembly of a functional preinitiation complex with RNA polymerase II and the general transcription factors. Binds to and activates cyclin-dependent kinase CDK8 that phosphorylates the CTD (C-terminal domain) of the large subunit of RNA polymerase II (RNAp II), which may inhibit the formation of a transcription initiation complex. This chain is Cyclin-C (Ccnc), found in Mus musculus (Mouse).